The following is a 227-amino-acid chain: Ribosomal RNA large subunit methyltransferase E (227 aa).

S-adenosyl-L-methionine contacts are provided by glycine 78, tryptophan 80, aspartate 103, aspartate 119, and aspartate 143. The Proton acceptor role is filled by lysine 183.

It belongs to the class I-like SAM-binding methyltransferase superfamily. RNA methyltransferase RlmE family.

It localises to the cytoplasm. The enzyme catalyses uridine(2552) in 23S rRNA + S-adenosyl-L-methionine = 2'-O-methyluridine(2552) in 23S rRNA + S-adenosyl-L-homocysteine + H(+). In terms of biological role, specifically methylates the uridine in position 2552 of 23S rRNA at the 2'-O position of the ribose in the fully assembled 50S ribosomal subunit. The chain is Ribosomal RNA large subunit methyltransferase E from Rickettsia canadensis (strain McKiel).